The following is a 392-amino-acid chain: MTIPDVPTQTLPDEGEIGFVHIGSLTTEAGAVIDDVHIAVQRWGELSPTRDNVVVVLHALTGDSHVTGPAGPGHPTGGWWDEMVGPGAPIDTDRWCAVATNVLGGCRGSTGPSSRTRDGKPWGSRFPRISIRDQVEADIAALAALGIDEVAAVVGGSMGGARALEWIVGHPSRVRAGLLLAVGARATADQIGTQCTQIAAIKSDPNWQGGDYHDTGRTPDAGLAIARRFAHLTYRGEVELDTRFGNDAQLDEDPANSGRYAVQSYLEYQGVKLVERFDAGSYVVLTEALNSHDVGRARGGVRKALRSCPVPVVVGGITSDRLYPLRLQQELAEQLPGCAELQVVDSICGHDGFLVESEAVGEMIRKTLLLAGSQSAGPGGAGPGSRKGTTRR.

The AB hydrolase-1 domain occupies 52-356 (NVVVVLHALT…ICGHDGFLVE (305 aa)). Ser-157 serves as the catalytic Nucleophile. Arg-227 serves as a coordination point for substrate. Catalysis depends on residues Asp-320 and His-350. Asp-351 serves as a coordination point for substrate. The disordered stretch occupies residues 373–392 (SQSAGPGGAGPGSRKGTTRR).

Belongs to the AB hydrolase superfamily. MetX family. As to quaternary structure, homodimer.

It localises to the cytoplasm. The catalysed reaction is L-homoserine + acetyl-CoA = O-acetyl-L-homoserine + CoA. It participates in amino-acid biosynthesis; L-methionine biosynthesis via de novo pathway; O-acetyl-L-homoserine from L-homoserine: step 1/1. In terms of biological role, transfers an acetyl group from acetyl-CoA to L-homoserine, forming acetyl-L-homoserine. The chain is Homoserine O-acetyltransferase from Mycolicibacterium paratuberculosis (strain ATCC BAA-968 / K-10) (Mycobacterium paratuberculosis).